The primary structure comprises 252 residues: Short chain dehydrogenase andC (252 aa).

A signal peptide spans 1–25 (MGFLQDKVVIITGAAAGIGLATATA). NADP(+)-binding residues include Ile-11, Asp-57, and Arg-119. Catalysis depends on Ser-137, which acts as the Proton donor. Tyr-151 and Lys-155 together coordinate NADP(+). Catalysis depends on Tyr-151, which acts as the Proton acceptor. Lys-155 serves as the catalytic Lowers pKa of active site Tyr.

The protein belongs to the short-chain dehydrogenases/reductases (SDR) family.

It functions in the pathway secondary metabolite biosynthesis; terpenoid biosynthesis. Functionally, short chain dehydrogenase; part of the gene cluster that mediates the biosynthesis of anditomin, a fungal meroterpenoid. The first step of the pathway is the synthesis of 3,5-dimethylorsellinic acid (DMOA) by the polyketide synthase andM. DMOA is then converted to the phthalide compound 5,7-dihydroxy-4,6-dimethylphthalide (DHDMP) by the cytochrome P450 monooxygenase andK, which is further prenylated by the prenyltransferase andD to yield farnesyl-DHDMP. Further epoxidation by the FAD-dependent monooxygenase andE leads to epoxyfarnesyl-DHDMP. The next step involves the terpene cyclase andB that converts epoxyfarnesyl-DHDMP into preandiloid A through opening of the epoxide ring followed by the cyclization of the farnesyl moiety. Preandiloid A is in turn oxidized at the C-3 hydroxyl group to yield preandiloid B by the dehydrogenase andC. The dioxygenase andA is solely responsible for the dehydrogenation of preandiloid B leading to the enone preandiloid C, as well as for the intriguing structural rearrangement to generate the bicyclo[2.2.2]octane core, transforming preandiloid C into andiconin. FAD-binding monooxygenase andJ then produces andilesin D which is reduced by dehydrogenase andI to yield andilesin A. Action of acetyltransferase andG followed by a spontaneous acetate elimination leads then to andilesin B, which is in turn substrate of the short chain dehydrogenase andH to yield andilesin C. Finally, the dioxygenase andF catalyzes the transformation of andilesin C to anditomin. This chain is Short chain dehydrogenase andC, found in Emericella variicolor (Aspergillus stellatus).